Here is a 386-residue protein sequence, read N- to C-terminus: 5-hydroxytryptamine receptor 1B (386 aa).

The Extracellular segment spans residues Met-1–Leu-42. Asn-24 and Asn-28 each carry an N-linked (GlcNAc...) asparagine glycan. The helical transmembrane segment at Pro-43 to Ala-68 threads the bilayer. At Thr-69–Tyr-82 the chain is on the cytoplasmic side. A helical membrane pass occupies residues Leu-83 to Val-107. The Extracellular portion of the chain corresponds to Thr-108–Gln-115. A helical transmembrane segment spans residues Val-116–Leu-141. A disulfide bridge connects residues Cys-118 and Cys-195. Residues Asp-125 and Thr-130 each coordinate ergotamine. The DRY motif; important for ligand-induced conformation changes and signaling motif lies at Asp-142–Tyr-144. Residues Asp-142 to Arg-161 are Cytoplasmic-facing. Residues Ala-162 to Pro-180 form a helical membrane-spanning segment. Topologically, residues Phe-181–His-201 are extracellular. Val-197 lines the ergotamine pocket. The helical transmembrane segment at Val-202 to Gly-225 threads the bilayer. At Arg-226–Thr-311 the chain is on the cytoplasmic side. Polar residues predominate over residues Asp-255–Ser-268. The tract at residues Asp-255 to Gly-278 is disordered. Residues Leu-312–Met-333 traverse the membrane as a helical segment. At Pro-334–His-343 the chain is on the extracellular side. The helical transmembrane segment at Met-344–Thr-366 threads the bilayer. An NPxxY motif; important for ligand-induced conformation changes and signaling motif is present at residues Asn-361–Tyr-365. Topologically, residues Met-367 to Gly-386 are cytoplasmic. Cys-384 is lipidated: S-palmitoyl cysteine.

Belongs to the G-protein coupled receptor 1 family. As to quaternary structure, homodimer. Heterodimer with HTR1D. Post-translationally, phosphorylated. Desensitization of the receptor may be mediated by its phosphorylation. In terms of processing, palmitoylated.

The protein localises to the cell membrane. Functionally, G-protein coupled receptor for 5-hydroxytryptamine (serotonin). Also functions as a receptor for ergot alkaloid derivatives, various anxiolytic and antidepressant drugs and other psychoactive substances, such as lysergic acid diethylamide (LSD). Ligand binding causes a conformation change that triggers signaling via guanine nucleotide-binding proteins (G proteins) and modulates the activity of downstream effectors, such as adenylate cyclase. HTR1B is coupled to G(i)/G(o) G alpha proteins and mediates inhibitory neurotransmission by inhibiting adenylate cyclase activity. Arrestin family members inhibit signaling via G proteins and mediate activation of alternative signaling pathways. Regulates the release of 5-hydroxytryptamine, dopamine and acetylcholine in the brain, and thereby affects neural activity, nociceptive processing, pain perception, mood and behavior. Besides, plays a role in vasoconstriction of cerebral arteries. This is 5-hydroxytryptamine receptor 1B (HTR1B) from Cricetulus griseus (Chinese hamster).